The following is a 200-amino-acid chain: Holliday junction resolvase RecU (200 aa).

Mg(2+)-binding residues include T85, D87, E100, and Q119.

This sequence belongs to the RecU family. Requires Mg(2+) as cofactor.

It localises to the cytoplasm. It carries out the reaction Endonucleolytic cleavage at a junction such as a reciprocal single-stranded crossover between two homologous DNA duplexes (Holliday junction).. Its function is as follows. Endonuclease that resolves Holliday junction intermediates in genetic recombination. Cleaves mobile four-strand junctions by introducing symmetrical nicks in paired strands. Promotes annealing of linear ssDNA with homologous dsDNA. Required for DNA repair, homologous recombination and chromosome segregation. This is Holliday junction resolvase RecU from Bacillus cytotoxicus (strain DSM 22905 / CIP 110041 / 391-98 / NVH 391-98).